Consider the following 201-residue polypeptide: Small ribosomal subunit protein uS5 (201 aa).

Positions 1–28 (MAHQNEQRGGGDRGRGRGRGRDRDQERD) are disordered. One can recognise an S5 DRBM domain in the interval 31–94 (LVDKLVHINR…DEAKKNMIRV (64 aa)). The disordered stretch occupies residues 173–201 (SVAAKRGLKVGDLVNRRDDGASSPEAIEA).

It belongs to the universal ribosomal protein uS5 family. In terms of assembly, part of the 30S ribosomal subunit. Contacts proteins S4 and S8.

In terms of biological role, with S4 and S12 plays an important role in translational accuracy. Located at the back of the 30S subunit body where it stabilizes the conformation of the head with respect to the body. This is Small ribosomal subunit protein uS5 from Maricaulis maris (strain MCS10) (Caulobacter maris).